The sequence spans 355 residues: Cyanide hydratase (355 aa).

A CN hydrolase domain is found at 6-286 (YKAAAVTSEP…GLLFVDIDLN (281 aa)). Glutamate 46 (proton acceptor) is an active-site residue. Lysine 128 is an active-site residue. Cysteine 163 functions as the Nucleophile in the catalytic mechanism.

This sequence belongs to the carbon-nitrogen hydrolase superfamily. Nitrilase family. As to quaternary structure, oligomer of dimers, forming left-handed helical fibers.

The catalysed reaction is formamide = hydrogen cyanide + H2O. Catalyzes the hydration of cyanide to formamide. Degradation of cyanide may be important for plant pathogenic fungi in infection of cyanogenic plants. Also has low but significant nitrilase activity with acetonitrile, propionitrile and benzonitrile. The sequence is that of Cyanide hydratase from Gibberella baccata (Fusarium lateritium).